The sequence spans 237 residues: Ribonuclease PH (237 aa).

Residues arginine 86 and 124–126 each bind phosphate; that span reads GTR.

The protein belongs to the RNase PH family. In terms of assembly, homohexameric ring arranged as a trimer of dimers.

The catalysed reaction is tRNA(n+1) + phosphate = tRNA(n) + a ribonucleoside 5'-diphosphate. Functionally, phosphorolytic 3'-5' exoribonuclease that plays an important role in tRNA 3'-end maturation. Removes nucleotide residues following the 3'-CCA terminus of tRNAs; can also add nucleotides to the ends of RNA molecules by using nucleoside diphosphates as substrates, but this may not be physiologically important. Probably plays a role in initiation of 16S rRNA degradation (leading to ribosome degradation) during starvation. The protein is Ribonuclease PH of Cereibacter sphaeroides (strain ATCC 17025 / ATH 2.4.3) (Rhodobacter sphaeroides).